The chain runs to 263 residues: tRNA pseudouridine synthase A (263 aa).

Aspartate 51 (nucleophile) is an active-site residue. Tyrosine 109 is a substrate binding site.

Belongs to the tRNA pseudouridine synthase TruA family. Homodimer.

It catalyses the reaction uridine(38/39/40) in tRNA = pseudouridine(38/39/40) in tRNA. In terms of biological role, formation of pseudouridine at positions 38, 39 and 40 in the anticodon stem and loop of transfer RNAs. This is tRNA pseudouridine synthase A from Mannheimia succiniciproducens (strain KCTC 0769BP / MBEL55E).